Reading from the N-terminus, the 367-residue chain is Trans-enoyl reductase ffsC (367 aa).

55–58 (CDWK) is a binding site for NADP(+). 143–150 (TGIGTLGL) contributes to the substrate binding site. NADP(+) is bound by residues 203-206 (SAKN), Tyr-221, and 268-269 (LE). 288 to 292 (GMAIL) contributes to the substrate binding site. 357–358 (VS) is a binding site for NADP(+).

Belongs to the zinc-containing alcohol dehydrogenase family. As to quaternary structure, monomer.

It participates in mycotoxin biosynthesis. In terms of biological role, trans-enoyl reductase; part of the gene cluster that mediates the biosynthesis of the cytotoxic leucine-containing cytochalasans, including aspochalasin C, aspochalasin E, TMC-169, flavichalasine F, aspergillin PZ, aspochalasin M and flavichalasine G. The first step in the pathway is catalyzed by the hybrid PKS-NRPS ffsA that utilizes 8 units of malonyl-CoA to iteratively assemble the octaketide chain before addition of L-leucine by the C-terminal NRPS modules. Because ffsA lacks a designated enoylreductase (ER) domain, the required activity is provided the enoyl reductase fssC. The methyltransferase (MT) domain of ffsA catalyzes the alpha-methylation at C10 and C14 using S-adenosyl-L-methionine as the methyl-donating cosubstrate. Reduction by the hydrolyase ffsE, followed by dehydration and intra-molecular Diels-Alder cyclization by the Diels-Alderase ffsF then yield the required isoindolone-fused macrocycle. A number of oxidative steps catalyzed by the tailoring cytochrome P450 monooxygenase ffsD, the FAD-linked oxidoreductase ffsJ and the short-chain dehydrogenase/reductase ffsI, are further required to afford the final products. This is Trans-enoyl reductase ffsC from Aspergillus flavipes.